A 77-amino-acid chain; its full sequence is NADH dehydrogenase [ubiquinone] 1 alpha subcomplex subunit 3 (77 aa).

The chain crosses the membrane as a helical span at residues 23–45 (IVGGSALALAGIVMATIGVANYY).

Belongs to the complex I NDUFA3 subunit family. Complex I is composed of 43 different subunits.

The protein localises to the mitochondrion inner membrane. Its subcellular location is the cytoplasm. It is found in the myofibril. The protein resides in the sarcomere. It localises to the z line. Its function is as follows. Accessory subunit of the mitochondrial membrane respiratory chain NADH dehydrogenase (Complex I), that is believed not to be involved in catalysis. Complex I functions in the transfer of electrons from NADH to the respiratory chain. The immediate electron acceptor for the enzyme is believed to be ubiquinone. Required for the maintenance of muscle integrity and for cell proliferation in the wing imaginal disc epithelium, possibly by interacting with the chaperone-assisted selective autophagy (CASA) pathway. This is NADH dehydrogenase [ubiquinone] 1 alpha subcomplex subunit 3 from Drosophila melanogaster (Fruit fly).